The sequence spans 1431 residues: 1-phosphatidylinositol 4,5-bisphosphate phosphodiesterase beta egl-8 (1431 aa).

Residues 340-491 (MDMDQPLCHY…LRKKILIKNK (152 aa)) enclose the PI-PLC X-box domain. Residue H355 is part of the active site. Residues N356, E385, and D387 each coordinate Ca(2+). The active site involves H403. E437 contributes to the Ca(2+) binding site. Substrate-binding residues include K489 and K491. 2 disordered regions span residues 510 to 601 (KLDE…MVPD) and 632 to 692 (RRQS…SGPS). Residues 543–556 (EEVDDDTSDDDDDP) show a composition bias toward acidic residues. 3 stretches are compositionally biased toward low complexity: residues 572–586 (NTTS…ARSS), 652–661 (SSSSPATPSI), and 668–692 (ATSS…SGPS). The region spanning 758 to 874 (LSSLVNYTHP…GYLLKPDFLR (117 aa)) is the PI-PLC Y-box domain. Residues S787 and R814 each coordinate substrate. The C2 domain maps to 877-1002 (DRTFDPFSES…SLRSDTNQSF (126 aa)). Disordered stretches follow at residues 1072-1119 (QPPR…VAVD), 1150-1176 (DLRK…SSIA), and 1188-1216 (NNRR…SASG). Polar residues predominate over residues 1074–1113 (PRQNGSSADLLANNGQTGSARGDQTSSMASSTIRSPNEQP). A coiled-coil region spans residues 1135 to 1166 (KAFAKLLKRFQKELDDLRKKHQKQRDSIQKQQ). Residues 1150–1162 (DLRKKHQKQRDSI) are compositionally biased toward basic and acidic residues. Residues 1191–1200 (RSTKKEKGSR) are compositionally biased toward basic residues. A compositionally biased stretch (low complexity) spans 1204–1216 (TASVSSGCGSASG). Coiled coils occupy residues 1288–1318 (DEEE…KNQM) and 1368–1402 (EKNL…QLEQ).

It depends on Ca(2+) as a cofactor. In terms of tissue distribution, expressed in most or all neurons with high expression in the head and tail ganglia and low expression in the motor neurons of the ventral cord. Expressed in the intestine (at protein level). In males, expressed in vas deferens, spicule protractor muscles, diagonal muscles and a male-specific neuron.

The protein localises to the perikaryon. It localises to the cell projection. The protein resides in the axon. It is found in the synapse. Its subcellular location is the cell junction. The protein localises to the adherens junction. The catalysed reaction is a 1,2-diacyl-sn-glycero-3-phospho-(1D-myo-inositol-4,5-bisphosphate) + H2O = 1D-myo-inositol 1,4,5-trisphosphate + a 1,2-diacyl-sn-glycerol + H(+). Mediates the production of the second messenger molecules diacylglycerol (DAG) and inositol 1,4,5-trisphosphate (IP3) which plays an important role in the regulation of intracellular signaling cascades. Required in the nervous system to modulate neuronal activity. Facilitates synaptic transmission at neuromuscular junctions by regulating the release of acetylcholine from the motor neurons and thus affecting locomotion. Plays a role in efficient egg laying and defecation. Involved in axon regeneration after injury. Plays a role in male mating behavior by regulating spicule insertion and sperm transfer. By triggering Ca(2+) transient via IP3-mediated activation of IPR3 receptor itr-1 in ASH sensory neurons, regulates avoidance behavior in response to nose touch. By activating tpa-1 via DAG production, required for the expression of antimicrobial peptide nlp-29 in response to fungal infection. During embryogenesis, may play a role in epidermal morphogenesis together with plc-1. The protein is 1-phosphatidylinositol 4,5-bisphosphate phosphodiesterase beta egl-8 of Caenorhabditis elegans.